A 423-amino-acid polypeptide reads, in one-letter code: Glutamate-1-semialdehyde 2,1-aminomutase (423 aa).

Position 258 is an N6-(pyridoxal phosphate)lysine (Lys258).

This sequence belongs to the class-III pyridoxal-phosphate-dependent aminotransferase family. HemL subfamily. Pyridoxal 5'-phosphate is required as a cofactor.

The protein localises to the cytoplasm. It catalyses the reaction (S)-4-amino-5-oxopentanoate = 5-aminolevulinate. Its pathway is porphyrin-containing compound metabolism; protoporphyrin-IX biosynthesis; 5-aminolevulinate from L-glutamyl-tRNA(Glu): step 2/2. This is Glutamate-1-semialdehyde 2,1-aminomutase from Pyrobaculum aerophilum (strain ATCC 51768 / DSM 7523 / JCM 9630 / CIP 104966 / NBRC 100827 / IM2).